The following is a 254-amino-acid chain: Imidazole glycerol phosphate synthase subunit HisF (254 aa).

Catalysis depends on residues aspartate 13 and aspartate 132.

This sequence belongs to the HisA/HisF family. Heterodimer of HisH and HisF.

The protein localises to the cytoplasm. The enzyme catalyses 5-[(5-phospho-1-deoxy-D-ribulos-1-ylimino)methylamino]-1-(5-phospho-beta-D-ribosyl)imidazole-4-carboxamide + L-glutamine = D-erythro-1-(imidazol-4-yl)glycerol 3-phosphate + 5-amino-1-(5-phospho-beta-D-ribosyl)imidazole-4-carboxamide + L-glutamate + H(+). The protein operates within amino-acid biosynthesis; L-histidine biosynthesis; L-histidine from 5-phospho-alpha-D-ribose 1-diphosphate: step 5/9. Its function is as follows. IGPS catalyzes the conversion of PRFAR and glutamine to IGP, AICAR and glutamate. The HisF subunit catalyzes the cyclization activity that produces IGP and AICAR from PRFAR using the ammonia provided by the HisH subunit. The polypeptide is Imidazole glycerol phosphate synthase subunit HisF (Wolinella succinogenes (strain ATCC 29543 / DSM 1740 / CCUG 13145 / JCM 31913 / LMG 7466 / NCTC 11488 / FDC 602W) (Vibrio succinogenes)).